We begin with the raw amino-acid sequence, 609 residues long: UvrABC system protein C (609 aa).

The GIY-YIG domain maps to 16–94 (HLPGVYRHLD…IKSLRPRYNI (79 aa)). The UVR domain occupies 203–238 (REVMDEIEARMLQASTELRFEEAAVLRDQMGSLSKV).

It belongs to the UvrC family. As to quaternary structure, interacts with UvrB in an incision complex.

The protein resides in the cytoplasm. Functionally, the UvrABC repair system catalyzes the recognition and processing of DNA lesions. UvrC both incises the 5' and 3' sides of the lesion. The N-terminal half is responsible for the 3' incision and the C-terminal half is responsible for the 5' incision. The chain is UvrABC system protein C from Bordetella bronchiseptica (strain ATCC BAA-588 / NCTC 13252 / RB50) (Alcaligenes bronchisepticus).